Here is a 157-residue protein sequence, read N- to C-terminus: SsrA-binding protein (157 aa).

The protein belongs to the SmpB family.

Its subcellular location is the cytoplasm. Its function is as follows. Required for rescue of stalled ribosomes mediated by trans-translation. Binds to transfer-messenger RNA (tmRNA), required for stable association of tmRNA with ribosomes. tmRNA and SmpB together mimic tRNA shape, replacing the anticodon stem-loop with SmpB. tmRNA is encoded by the ssrA gene; the 2 termini fold to resemble tRNA(Ala) and it encodes a 'tag peptide', a short internal open reading frame. During trans-translation Ala-aminoacylated tmRNA acts like a tRNA, entering the A-site of stalled ribosomes, displacing the stalled mRNA. The ribosome then switches to translate the ORF on the tmRNA; the nascent peptide is terminated with the 'tag peptide' encoded by the tmRNA and targeted for degradation. The ribosome is freed to recommence translation, which seems to be the essential function of trans-translation. The protein is SsrA-binding protein of Syntrophomonas wolfei subsp. wolfei (strain DSM 2245B / Goettingen).